Here is a 154-residue protein sequence, read N- to C-terminus: Large ribosomal subunit protein uL13 (154 aa).

The protein belongs to the universal ribosomal protein uL13 family. As to quaternary structure, part of the 50S ribosomal subunit.

Its function is as follows. This protein is one of the early assembly proteins of the 50S ribosomal subunit, although it is not seen to bind rRNA by itself. It is important during the early stages of 50S assembly. This is Large ribosomal subunit protein uL13 from Brucella melitensis biotype 2 (strain ATCC 23457).